A 203-amino-acid polypeptide reads, in one-letter code: Cardiotrophin-1 (203 aa).

Belongs to the IL-6 superfamily. As to expression, highly expressed in heart, skeletal muscle, liver, lung and kidney. Lower levels in testis and brain. No expression in spleen.

Its subcellular location is the secreted. Its function is as follows. Induces cardiac myocyte hypertrophy in vitro. Binds to and activates the ILST/gp130 receptor. The sequence is that of Cardiotrophin-1 (Ctf1) from Mus musculus (Mouse).